A 225-amino-acid polypeptide reads, in one-letter code: Protein-L-isoaspartate O-methyltransferase (225 aa).

Residue Ser-75 is part of the active site.

It belongs to the methyltransferase superfamily. L-isoaspartyl/D-aspartyl protein methyltransferase family.

Its subcellular location is the cytoplasm. It catalyses the reaction [protein]-L-isoaspartate + S-adenosyl-L-methionine = [protein]-L-isoaspartate alpha-methyl ester + S-adenosyl-L-homocysteine. Functionally, catalyzes the methyl esterification of L-isoaspartyl residues in peptides and proteins that result from spontaneous decomposition of normal L-aspartyl and L-asparaginyl residues. It plays a role in the repair and/or degradation of damaged proteins. The protein is Protein-L-isoaspartate O-methyltransferase of Xanthomonas axonopodis pv. citri (strain 306).